The primary structure comprises 890 residues: Alanine--tRNA ligase (890 aa).

Zn(2+)-binding residues include H573, H577, C676, and H680.

It belongs to the class-II aminoacyl-tRNA synthetase family. Zn(2+) serves as cofactor.

Its subcellular location is the cytoplasm. The catalysed reaction is tRNA(Ala) + L-alanine + ATP = L-alanyl-tRNA(Ala) + AMP + diphosphate. In terms of biological role, catalyzes the attachment of alanine to tRNA(Ala) in a two-step reaction: alanine is first activated by ATP to form Ala-AMP and then transferred to the acceptor end of tRNA(Ala). Also edits incorrectly charged Ser-tRNA(Ala) and Gly-tRNA(Ala) via its editing domain. The chain is Alanine--tRNA ligase from Corynebacterium efficiens (strain DSM 44549 / YS-314 / AJ 12310 / JCM 11189 / NBRC 100395).